The following is a 689-amino-acid chain: UvrABC system protein C (689 aa).

The segment covering 1–19 (MTSDSSDTAKQIGSGQPSG) has biased composition (polar residues). Residues 1 to 59 (MTSDSSDTAKQIGSGQPSGSPADMRRRDGVAPEQEVDPASLETDEDDEARLPDLPDEPV) are disordered. Residues 42–59 (ETDEDDEARLPDLPDEPV) are compositionally biased toward acidic residues. One can recognise a GIY-YIG domain in the interval 83-161 (TSPGVYRMMN…IKQLRPRFNV (79 aa)). Residues 271-306 (RAVKEDLARAMEQAAADLAFERAALYRDRLAALSAI) form the UVR domain.

It belongs to the UvrC family. As to quaternary structure, interacts with UvrB in an incision complex.

The protein localises to the cytoplasm. In terms of biological role, the UvrABC repair system catalyzes the recognition and processing of DNA lesions. UvrC both incises the 5' and 3' sides of the lesion. The N-terminal half is responsible for the 3' incision and the C-terminal half is responsible for the 5' incision. This chain is UvrABC system protein C, found in Nitrobacter winogradskyi (strain ATCC 25391 / DSM 10237 / CIP 104748 / NCIMB 11846 / Nb-255).